The following is a 466-amino-acid chain: UDP-N-acetylmuramoylalanine--D-glutamate ligase (466 aa).

Position 117-123 (117-123) interacts with ATP; it reads GTKGKTT.

It belongs to the MurCDEF family.

It is found in the cytoplasm. The catalysed reaction is UDP-N-acetyl-alpha-D-muramoyl-L-alanine + D-glutamate + ATP = UDP-N-acetyl-alpha-D-muramoyl-L-alanyl-D-glutamate + ADP + phosphate + H(+). The protein operates within cell wall biogenesis; peptidoglycan biosynthesis. Functionally, cell wall formation. Catalyzes the addition of glutamate to the nucleotide precursor UDP-N-acetylmuramoyl-L-alanine (UMA). In Roseiflexus sp. (strain RS-1), this protein is UDP-N-acetylmuramoylalanine--D-glutamate ligase.